A 332-amino-acid polypeptide reads, in one-letter code: Lipoyl synthase (332 aa).

Cys-74, Cys-79, Cys-85, Cys-100, Cys-104, Cys-107, and Ser-314 together coordinate [4Fe-4S] cluster. The Radical SAM core domain maps to 85–303 (CFGKGTATFM…EEKAYEMGFS (219 aa)).

This sequence belongs to the radical SAM superfamily. Lipoyl synthase family. [4Fe-4S] cluster is required as a cofactor.

It is found in the cytoplasm. The enzyme catalyses [[Fe-S] cluster scaffold protein carrying a second [4Fe-4S](2+) cluster] + N(6)-octanoyl-L-lysyl-[protein] + 2 oxidized [2Fe-2S]-[ferredoxin] + 2 S-adenosyl-L-methionine + 4 H(+) = [[Fe-S] cluster scaffold protein] + N(6)-[(R)-dihydrolipoyl]-L-lysyl-[protein] + 4 Fe(3+) + 2 hydrogen sulfide + 2 5'-deoxyadenosine + 2 L-methionine + 2 reduced [2Fe-2S]-[ferredoxin]. The protein operates within protein modification; protein lipoylation via endogenous pathway; protein N(6)-(lipoyl)lysine from octanoyl-[acyl-carrier-protein]: step 2/2. Its function is as follows. Catalyzes the radical-mediated insertion of two sulfur atoms into the C-6 and C-8 positions of the octanoyl moiety bound to the lipoyl domains of lipoate-dependent enzymes, thereby converting the octanoylated domains into lipoylated derivatives. The polypeptide is Lipoyl synthase (Polaromonas naphthalenivorans (strain CJ2)).